The chain runs to 311 residues: Pyrimidine-specific ribonucleoside hydrolase RihA (311 aa).

The active site involves histidine 240.

Belongs to the IUNH family. RihA subfamily.

In terms of biological role, hydrolyzes cytidine or uridine to ribose and cytosine or uracil, respectively. The chain is Pyrimidine-specific ribonucleoside hydrolase RihA from Salmonella newport (strain SL254).